We begin with the raw amino-acid sequence, 375 residues long: Fructose-1,6-bisphosphate aldolase/phosphatase (375 aa).

The active-site Proton acceptor; for FBP phosphatase activity is aspartate 15. Mg(2+)-binding residues include aspartate 15, histidine 22, aspartate 56, and aspartate 57. Histidine 22 contacts beta-D-fructose 1,6-bisphosphate. A dihydroxyacetone phosphate-binding site is contributed by histidine 22. Position 94 (tyrosine 94) interacts with beta-D-fructose 1,6-bisphosphate. Glutamine 98 provides a ligand contact to Mg(2+). 107 to 108 contributes to the beta-D-fructose 1,6-bisphosphate binding site; sequence GN. Aspartate 135 provides a ligand contact to Mg(2+). Lysine 136 lines the beta-D-fructose 1,6-bisphosphate pocket. A dihydroxyacetone phosphate-binding site is contributed by lysine 136. The Proton donor/acceptor; for FBP aldolase activity role is filled by tyrosine 237. The Mg(2+) site is built by lysine 240, aspartate 241, and aspartate 242. The Schiff-base intermediate with DHAP; for FBP aldolase activity role is filled by lysine 240. Residues 250–251, arginine 274, aspartate 295, and tyrosine 357 contribute to the beta-D-fructose 1,6-bisphosphate site; that span reads QS. Arginine 274 and aspartate 295 together coordinate dihydroxyacetone phosphate.

Belongs to the FBP aldolase/phosphatase family. As to quaternary structure, homooctamer; dimer of tetramers. Requires Mg(2+) as cofactor.

It catalyses the reaction beta-D-fructose 1,6-bisphosphate = D-glyceraldehyde 3-phosphate + dihydroxyacetone phosphate. The enzyme catalyses beta-D-fructose 1,6-bisphosphate + H2O = beta-D-fructose 6-phosphate + phosphate. The protein operates within carbohydrate biosynthesis; gluconeogenesis. FBPase activity is inhibited by Ca(2+), ATP, ADP and phosphoenolpyruvate. In terms of biological role, catalyzes two subsequent steps in gluconeogenesis: the aldol condensation of dihydroxyacetone phosphate (DHAP) and glyceraldehyde-3-phosphate (GA3P) to fructose-1,6-bisphosphate (FBP), and the dephosphorylation of FBP to fructose-6-phosphate (F6P). Can also dephosphorylate, with lower activity, other related substrates including fructose-1-phosphate, fructose-6-phosphate, glucose-1-phosphate, glucose-6-phosphate, glycerol-2-phosphate, phosphoenolpyruvate, 5'-AMP, 6'-ADP and 7'-ATP. The sequence is that of Fructose-1,6-bisphosphate aldolase/phosphatase from Thermococcus onnurineus (strain NA1).